Here is a 510-residue protein sequence, read N- to C-terminus: Zinc finger protein 692 (510 aa).

2 disordered regions span residues 1–20 (MAAS…RQLD) and 121–306 (WGPS…EDTA). Ser-161 carries the phosphoserine modification. Residues 163 to 172 (CDERAQEARM) show a composition bias toward basic and acidic residues. Acidic residues predominate over residues 188–201 (EDGEEEEEDEEEML). The residue at position 225 (Ser-225) is a Phosphoserine. The segment covering 237–265 (APAPAAVPAPLASPSSSASSLGSGAPGPV) has biased composition (low complexity). A compositionally biased stretch (polar residues) spans 278–297 (QADQQTEPLASPGSQAQSAL). 5 consecutive C2H2-type zinc fingers follow at residues 322–347 (LPCD…KYQH), 353–377 (FSCP…VKLH), 383–405 (YICE…RRIH), 411–433 (LQCE…RRKH), and 442–465 (FPCE…SKSH). Position 464 is a phosphoserine (Ser-464).

This sequence belongs to the krueppel C2H2-type zinc-finger protein family. Phosphorylation at Ser-464 results in loss of DNA-binding activity.

It localises to the nucleus. Its function is as follows. May act as an transcriptional repressor for PCK1 gene expression, in turn may participate in the hepatic gluconeogenesis regulation through the activated AMPK signaling pathway. This Bos taurus (Bovine) protein is Zinc finger protein 692.